The following is a 219-amino-acid chain: dTTP/UTP pyrophosphatase (219 aa).

Asp-79 acts as the Proton acceptor in catalysis.

It belongs to the Maf family. YhdE subfamily. A divalent metal cation serves as cofactor.

It localises to the cytoplasm. It catalyses the reaction dTTP + H2O = dTMP + diphosphate + H(+). The enzyme catalyses UTP + H2O = UMP + diphosphate + H(+). In terms of biological role, nucleoside triphosphate pyrophosphatase that hydrolyzes dTTP and UTP. May have a dual role in cell division arrest and in preventing the incorporation of modified nucleotides into cellular nucleic acids. This is dTTP/UTP pyrophosphatase from Oleidesulfovibrio alaskensis (strain ATCC BAA-1058 / DSM 17464 / G20) (Desulfovibrio alaskensis).